We begin with the raw amino-acid sequence, 176 residues long: Ribosome rescue factor SmrB (176 aa).

The Smr domain occupies 93 to 168; it reads LDLHGYRQSE…GDAALLVLID (76 aa).

This sequence belongs to the SmrB family. Associates with collided ribosomes, but not with correctly translating polysomes.

In terms of biological role, acts as a ribosome collision sensor. Detects stalled/collided disomes (pairs of ribosomes where the leading ribosome is stalled and a second ribosome has collided with it) and endonucleolytically cleaves mRNA at the 5' boundary of the stalled ribosome. Stalled/collided disomes form a new interface (primarily via the 30S subunits) that binds SmrB. Cleaved mRNA becomes available for tmRNA ligation, leading to ribosomal subunit dissociation and rescue of stalled ribosomes. The chain is Ribosome rescue factor SmrB from Shewanella baltica (strain OS155 / ATCC BAA-1091).